Here is a 219-residue protein sequence, read N- to C-terminus: Large ribosomal subunit protein bL25 (219 aa).

Residues 194–219 (SSTELEETPEVPASAVPTTDQGESAE) are disordered. The span at 209-219 (VPTTDQGESAE) shows a compositional bias: polar residues.

It belongs to the bacterial ribosomal protein bL25 family. CTC subfamily. As to quaternary structure, part of the 50S ribosomal subunit; part of the 5S rRNA/L5/L18/L25 subcomplex. Contacts the 5S rRNA. Binds to the 5S rRNA independently of L5 and L18.

In terms of biological role, this is one of the proteins that binds to the 5S RNA in the ribosome where it forms part of the central protuberance. This chain is Large ribosomal subunit protein bL25, found in Legionella pneumophila (strain Paris).